Reading from the N-terminus, the 599-residue chain is Elongation factor 4 (599 aa).

A tr-type G domain is found at 4–186; sequence ENIRNFSIIA…EIVTKIPPPQ (183 aa). Residues 16-21 and 133-136 each bind GTP; these read DHGKST and NKID.

The protein belongs to the TRAFAC class translation factor GTPase superfamily. Classic translation factor GTPase family. LepA subfamily.

Its subcellular location is the cell inner membrane. It carries out the reaction GTP + H2O = GDP + phosphate + H(+). Its function is as follows. Required for accurate and efficient protein synthesis under certain stress conditions. May act as a fidelity factor of the translation reaction, by catalyzing a one-codon backward translocation of tRNAs on improperly translocated ribosomes. Back-translocation proceeds from a post-translocation (POST) complex to a pre-translocation (PRE) complex, thus giving elongation factor G a second chance to translocate the tRNAs correctly. Binds to ribosomes in a GTP-dependent manner. This chain is Elongation factor 4, found in Geotalea uraniireducens (strain Rf4) (Geobacter uraniireducens).